The sequence spans 417 residues: Phosphatidylcholine:ceramide cholinephosphotransferase 1 (417 aa).

Residues 11-74 (WSPEEVTNWL…LHMIETLKMA (64 aa)) enclose the SAM domain. 5 helical membrane-spanning segments follow: residues 140–160 (FLAF…ISVV), 188–208 (FSIC…QWLL), 219–239 (FFCI…VTTL), 280–300 (MCGD…YLFI), and 308–328 (LWWY…CILL). His-289 is an active-site residue. Residues 329-417 (AHDHYTVDVV…VKYSRLVNDT (89 aa)) are Cytoplasmic-facing. Active-site residues include His-332 and Asp-336.

Belongs to the sphingomyelin synthase family.

The protein localises to the golgi apparatus membrane. It carries out the reaction an N-acylsphing-4-enine + a 1,2-diacyl-sn-glycero-3-phosphocholine = a sphingomyelin + a 1,2-diacyl-sn-glycerol. The catalysed reaction is an N-acylsphing-4-enine + a 1,2-diacyl-sn-glycero-3-phosphoethanolamine = an N-acylsphing-4-enine 1-phosphoethanolamine + a 1,2-diacyl-sn-glycerol. In terms of biological role, major sphingomyelin synthase at the Golgi apparatus. Catalyzes the reversible transfer of phosphocholine moiety in sphingomyelin biosynthesis: in the forward reaction transfers phosphocholine head group of phosphatidylcholine (PC) on to ceramide (CER) to form ceramide phosphocholine (sphingomyelin, SM) and diacylglycerol (DAG) as by-product, and in the reverse reaction transfers phosphocholine from SM to DAG to form PC and CER. The direction of the reaction depends on the levels of CER and DAG in Golgi membranes. Converts the newly synthesized CER, that is transported from the endoplasmic reticulum to the trans-Golgi by the Cer transport protein (CERT), to SM. Can form a heteromeric complex with glucosylceramide synthase (GCS) increasing SMS activity and reducing glucosylceramide synthesis, a critical mechanism that controls the metabolic fate of CER in the Golgi. Does not use free phosphorylcholine or CDP-choline as donor. Can also transfer phosphoethanolamine head group of phosphatidylethanolamine (PE) on to CER to form ceramide phosphoethanolamine (CPE). Regulates receptor-mediated signal transduction via mitogenic DAG and proapoptotic CER, as well as via SM, a structural component of membrane rafts that serve as platforms for signal transduction and protein sorting. Plays a role in secretory transport via regulation of DAG pool at the Golgi apparatus and its downstream effects on PRKD1. This chain is Phosphatidylcholine:ceramide cholinephosphotransferase 1 (SGMS1), found in Gallus gallus (Chicken).